The chain runs to 487 residues: 2-succinylbenzoate--CoA ligase (487 aa).

The protein belongs to the ATP-dependent AMP-binding enzyme family. MenE subfamily.

The catalysed reaction is 2-succinylbenzoate + ATP + CoA = 2-succinylbenzoyl-CoA + AMP + diphosphate. It participates in quinol/quinone metabolism; 1,4-dihydroxy-2-naphthoate biosynthesis; 1,4-dihydroxy-2-naphthoate from chorismate: step 5/7. It functions in the pathway quinol/quinone metabolism; menaquinone biosynthesis. Functionally, converts 2-succinylbenzoate (OSB) to 2-succinylbenzoyl-CoA (OSB-CoA). This Bacillus velezensis (strain DSM 23117 / BGSC 10A6 / LMG 26770 / FZB42) (Bacillus amyloliquefaciens subsp. plantarum) protein is 2-succinylbenzoate--CoA ligase.